The primary structure comprises 319 residues: Zinc finger protein-like 1 homolog (319 aa).

The B box-type; degenerate zinc-finger motif lies at 1–43 (MGLCKCPKRKVTNLFCYEHRVNVCEFCLVDNHPNCVVQSYLNW). The RING-type; atypical zinc finger occupies 53–101 (CSLCHTTLTQGETIRLNCLHLLHWRCFDDWAASFPPTTAPAGYRCPCCS). The disordered stretch occupies residues 212-232 (ESSSDTRPLLRQDRDADNEEN). A compositionally biased stretch (basic and acidic residues) spans 219–232 (PLLRQDRDADNEEN). The chain crosses the membrane as a helical span at residues 264–284 (KMAIFVMFLALLALITIITVL).

The protein belongs to the ZFPL1 family.

It localises to the membrane. The chain is Zinc finger protein-like 1 homolog from Caenorhabditis briggsae.